The chain runs to 152 residues: Transcriptional repressor NrdR (152 aa).

A zinc finger spans residues 3–34; that stretch reads CPHCHHNGSRVIDSRPAEDGMSIRRRRECVNC. In terms of domain architecture, ATP-cone spans 49–139; it reads LLVVKKDGTR…VYRQFKDVDA (91 aa).

It belongs to the NrdR family. The cofactor is Zn(2+).

Functionally, negatively regulates transcription of bacterial ribonucleotide reductase nrd genes and operons by binding to NrdR-boxes. This Limosilactobacillus fermentum (strain NBRC 3956 / LMG 18251) (Lactobacillus fermentum) protein is Transcriptional repressor NrdR.